Here is a 60-residue protein sequence, read N- to C-terminus: Sperm protamine P1 (60 aa).

Positions 1–60 (MARYRHSRSRSRSRYQRRRRRRSRYRSQRRRYRRRRGSRRRRRRGRRRGYRRRYSRRRRY) are disordered.

The protein belongs to the protamine P1 family. Testis.

The protein localises to the nucleus. The protein resides in the chromosome. In terms of biological role, protamines substitute for histones in the chromatin of sperm during the haploid phase of spermatogenesis. They compact sperm DNA into a highly condensed, stable and inactive complex. In Phascolarctos cinereus (Koala), this protein is Sperm protamine P1 (PRM1).